The primary structure comprises 234 residues: Sugar fermentation stimulation protein homolog (234 aa).

The protein belongs to the SfsA family.

This chain is Sugar fermentation stimulation protein homolog, found in Shewanella halifaxensis (strain HAW-EB4).